We begin with the raw amino-acid sequence, 373 residues long: tRNA-specific 2-thiouridylase MnmA (373 aa).

ATP-binding positions include 18 to 25 (AMSGGVDS) and Leu-44. Cys-117 (nucleophile) is an active-site residue. Cys-117 and Cys-214 are oxidised to a cystine. Gly-141 lines the ATP pocket. The segment at 163 to 165 (RDQ) is interaction with tRNA. Residue Cys-214 is the Cysteine persulfide intermediate of the active site.

It belongs to the MnmA/TRMU family.

It localises to the cytoplasm. The enzyme catalyses S-sulfanyl-L-cysteinyl-[protein] + uridine(34) in tRNA + AH2 + ATP = 2-thiouridine(34) in tRNA + L-cysteinyl-[protein] + A + AMP + diphosphate + H(+). Functionally, catalyzes the 2-thiolation of uridine at the wobble position (U34) of tRNA, leading to the formation of s(2)U34. The chain is tRNA-specific 2-thiouridylase MnmA from Paramagnetospirillum magneticum (strain ATCC 700264 / AMB-1) (Magnetospirillum magneticum).